A 266-amino-acid polypeptide reads, in one-letter code: uncharacterized protein (266 aa).

A helical transmembrane segment spans residues 13 to 33; it reads IIGLMLIIFAGILFYAYILQH.

This sequence belongs to the LicD transferase family.

It is found in the membrane. This is an uncharacterized protein from Rickettsia prowazekii (strain Madrid E).